A 240-amino-acid chain; its full sequence is Small ribosomal subunit protein uS2 (240 aa).

This sequence belongs to the universal ribosomal protein uS2 family.

This Pasteurella multocida (strain Pm70) protein is Small ribosomal subunit protein uS2 (rpsB).